Reading from the N-terminus, the 318-residue chain is Protoheme IX farnesyltransferase (318 aa).

The next 9 membrane-spanning stretches (helical) occupy residues 31–51, 55–75, 98–118, 125–145, 153–173, 181–201, 206–228, 238–260, and 285–305; these read IILL…QGPL, LAIA…TLNC, IQPF…FILL, LAAG…THGL, IVIG…AVTG, ILFA…ALMI, AAVK…QILA, LALA…LLGL, and FSIF…LPGA.

The protein belongs to the UbiA prenyltransferase family. Protoheme IX farnesyltransferase subfamily.

It is found in the cell inner membrane. The enzyme catalyses heme b + (2E,6E)-farnesyl diphosphate + H2O = Fe(II)-heme o + diphosphate. It participates in porphyrin-containing compound metabolism; heme O biosynthesis; heme O from protoheme: step 1/1. Functionally, converts heme B (protoheme IX) to heme O by substitution of the vinyl group on carbon 2 of heme B porphyrin ring with a hydroxyethyl farnesyl side group. This is Protoheme IX farnesyltransferase from Synechococcus elongatus (strain ATCC 33912 / PCC 7942 / FACHB-805) (Anacystis nidulans R2).